The sequence spans 338 residues: Ketol-acid reductoisomerase (NADP(+)) (338 aa).

Residues 1–181 (MKVYYDKDAD…GGGKAGIIET (181 aa)) enclose the KARI N-terminal Rossmann domain. NADP(+) contacts are provided by residues 24 to 27 (YGSQ), arginine 47, and serine 52. Residue histidine 107 is part of the active site. Residue glycine 133 coordinates NADP(+). One can recognise a KARI C-terminal knotted domain in the interval 182–327 (NFREETETDL…EKLRAMMPWI (146 aa)). Mg(2+)-binding residues include aspartate 190, glutamate 194, glutamate 226, and glutamate 230. Position 251 (serine 251) interacts with substrate.

It belongs to the ketol-acid reductoisomerase family. Mg(2+) is required as a cofactor.

It catalyses the reaction (2R)-2,3-dihydroxy-3-methylbutanoate + NADP(+) = (2S)-2-acetolactate + NADPH + H(+). It carries out the reaction (2R,3R)-2,3-dihydroxy-3-methylpentanoate + NADP(+) = (S)-2-ethyl-2-hydroxy-3-oxobutanoate + NADPH + H(+). It functions in the pathway amino-acid biosynthesis; L-isoleucine biosynthesis; L-isoleucine from 2-oxobutanoate: step 2/4. Its pathway is amino-acid biosynthesis; L-valine biosynthesis; L-valine from pyruvate: step 2/4. In terms of biological role, involved in the biosynthesis of branched-chain amino acids (BCAA). Catalyzes an alkyl-migration followed by a ketol-acid reduction of (S)-2-acetolactate (S2AL) to yield (R)-2,3-dihydroxy-isovalerate. In the isomerase reaction, S2AL is rearranged via a Mg-dependent methyl migration to produce 3-hydroxy-3-methyl-2-ketobutyrate (HMKB). In the reductase reaction, this 2-ketoacid undergoes a metal-dependent reduction by NADPH to yield (R)-2,3-dihydroxy-isovalerate. The polypeptide is Ketol-acid reductoisomerase (NADP(+)) (Methylibium petroleiphilum (strain ATCC BAA-1232 / LMG 22953 / PM1)).